Here is a 354-residue protein sequence, read N- to C-terminus: Guanine nucleotide-binding protein G(i) subunit alpha-1 (354 aa).

Gly-2 is lipidated: N-myristoyl glycine. Residue Cys-3 is the site of S-palmitoyl cysteine attachment. The G-alpha domain maps to 32–354 (REVKLLLLGA…KNNLKDCGLF (323 aa)). The G1 motif stretch occupies residues 35-48 (KLLLLGAGESGKST). GTP-binding positions include 43-48 (ESGKST), 150-151 (DS), and 175-178 (LRTR). Ser-47 is a Mg(2+) binding site. The tract at residues 173-181 (DVLRTRVKT) is G2 motif. Thr-181 is a Mg(2+) binding site. The tract at residues 196-205 (FKMFDVGGQR) is G3 motif. Residues 200–204 (DVGGQ), 269–272 (NKKD), and Ala-326 contribute to the GTP site. The tract at residues 265 to 272 (ILFLNKKD) is G4 motif. The tract at residues 324-329 (TCATDT) is G5 motif.

Belongs to the G-alpha family. G(i/o/t/z) subfamily. As to quaternary structure, heterotrimeric G proteins are composed of 3 units; alpha, beta and gamma. The alpha chain contains the guanine nucleotide binding site. Part of a spindle orientation complex. Identified in complex with the beta subunit GNB1 and the gamma subunit GNG1. Identified in complex with the beta subunit GNB1 and the gamma subunit GNG2. GTP binding causes dissociation of the heterotrimer, liberating the individual subunits so that they can interact with downstream effector proteins. In terms of processing, myristoylation at Gly-2 is required for membrane anchoring before palmitoylation. Palmitoylation at Cys-3 varies with membrane lipid composition.

The protein resides in the nucleus. Its subcellular location is the cytoplasm. The protein localises to the cell membrane. It localises to the cytoskeleton. It is found in the microtubule organizing center. The protein resides in the centrosome. Its subcellular location is the cell cortex. The protein localises to the membrane. The enzyme catalyses GTP + H2O = GDP + phosphate + H(+). In terms of biological role, guanine nucleotide-binding proteins (G proteins) function as transducers downstream of G protein-coupled receptors (GPCRs) in numerous signaling cascades. The alpha chain contains the guanine nucleotide binding site and alternates between an active, GTP-bound state and an inactive, GDP-bound state. Signaling by an activated GPCR promotes GDP release and GTP binding. The alpha subunit has a low GTPase activity that converts bound GTP to GDP, thereby terminating the signal. Both GDP release and GTP hydrolysis are modulated by numerous regulatory proteins. Signaling is mediated via effector proteins, such as adenylate cyclase. Inhibits adenylate cyclase activity of ADCY1, ADCY5 and ADCY6, leading to decreased intracellular cAMP levels. Required for cortical dynein-dynactin complex recruitment during metaphase. This is Guanine nucleotide-binding protein G(i) subunit alpha-1 (GNAI1) from Gallus gallus (Chicken).